Consider the following 119-residue polypeptide: uncharacterized protein (119 aa).

Positions 1–22 (MQGQAGKRKTDGKVPSNTEQNC) are disordered.

This is an uncharacterized protein from Saccharomyces cerevisiae (strain ATCC 204508 / S288c) (Baker's yeast).